A 525-amino-acid chain; its full sequence is Sodium-dependent lysophosphatidylcholine symporter 1 (525 aa).

The tract at residues 1–29 (MEKESENASCAGLLGQKNEPGSPTQSRSG) is disordered. At 1–32 (MEKESENASCAGLLGQKNEPGSPTQSRSGKHK) the chain is on the cytoplasmic side. A helical membrane pass occupies residues 33–62 (LSVCSKICFAIGGAPYQITGCALGFFLQIF). Over 63-73 (LLDIAQVPPFY) the chain is Extracellular. A helical transmembrane segment spans residues 74–94 (ASIILFSGRVWDAITDPLVGF). At 95-106 (FVSKSSWTRLGR) the chain is on the cytoplasmic side. Residues 107-126 (LLPWVVFSTPFAVVSYLLIW) form a helical membrane-spanning segment. Residues 127–137 (FVPGFSGVSMV) lie on the Extracellular side of the membrane. The helical transmembrane segment at 138–162 (IWYLVFYCLFQTLVTCFHVPYSALT) threads the bilayer. Residues 163 to 169 (MFISKEQ) lie on the Cytoplasmic side of the membrane. A helical transmembrane segment spans residues 170 to 201 (SDRDSATGYRMTVEVLGTVLGTAIQGQIVGRE). Residues 202 to 226 (NTPCVEHIRETHLYNTSVIMEDLNI) are Extracellular-facing. Residues Cys205 and Cys458 are joined by a disulfide bond. 2 N-linked (GlcNAc...) asparagine glycosylation sites follow: Asn216 and Asn225. A helical transmembrane segment spans residues 227-260 (THDVESLSSTRDAYMIAAGVICAIYVLCAIILTL). Topologically, residues 261–291 (GVREKRDAYELLSDQPFSFWQGLKLVMSHKP) are cytoplasmic. Residues 292–318 (YIKLITGFLFTSLAFMLLEGNFALFLT) form a helical membrane-spanning segment. Over 319–329 (YTMGFRRDFQN) the chain is Extracellular. A helical transmembrane segment spans residues 330–348 (ILLVVMLSATLTVPFWQWF). The Cytoplasmic segment spans residues 349 to 352 (LTRF). A helical transmembrane segment spans residues 353–374 (GKKTAVYFGISSVIPFLILVVL). Over 375 to 377 (MES) the chain is Extracellular. A helical transmembrane segment spans residues 378-414 (NLILAYVVAVAAGLSVAAAFLLPWSMLPDVIDDFILK). Over 415–424 (NPDSHGHEPI) the chain is Cytoplasmic. Residues 425–451 (FFSFYVFFTKFASGVSLGISTLSLDFA) form a helical membrane-spanning segment. Topologically, residues 452–463 (GYQTRACSQPEQ) are extracellular. The helical transmembrane segment at 464-487 (VNLTLKMLICVAPVILILLGLLLF) threads the bilayer. Residues 488–525 (ILYPINEEKRKQNKKALQLIRESNRDSDSDSLELASNV) are Cytoplasmic-facing.

The protein belongs to the major facilitator superfamily.

It localises to the cell membrane. The protein resides in the endoplasmic reticulum membrane. The catalysed reaction is a 1-acyl-sn-glycero-3-phosphocholine(in) + Na(+)(in) = a 1-acyl-sn-glycero-3-phosphocholine(out) + Na(+)(out). The enzyme catalyses 1-(4Z,7Z,10Z,13Z,16Z,19Z-docosahexaenoyl)-sn-glycero-3-phosphocholine(in) + Na(+)(in) = 1-(4Z,7Z,10Z,13Z,16Z,19Z-docosahexaenoyl)-sn-glycero-3-phosphocholine(out) + Na(+)(out). It carries out the reaction 1-(9Z-octadecenoyl)-sn-glycero-3-phosphocholine(in) + Na(+)(in) = 1-(9Z-octadecenoyl)-sn-glycero-3-phosphocholine(out) + Na(+)(out). It catalyses the reaction 1-hexadecanoyl-sn-glycero-3-phosphocholine(in) + Na(+)(in) = 1-hexadecanoyl-sn-glycero-3-phosphocholine(out) + Na(+)(out). The catalysed reaction is a 1-acyl-sn-glycero-3-phosphoethanolamine(in) + Na(+)(in) = a 1-acyl-sn-glycero-3-phosphoethanolamine(out) + Na(+)(out). Its function is as follows. Sodium-dependent lysophosphatidylcholine (LPC) symporter, which plays an essential role for blood-brain barrier formation and function. Specifically expressed in endothelium of the blood-brain barrier of micro-vessels and transports LPC into the brain. Transport of LPC is essential because it constitutes the major mechanism by which docosahexaenoic acid (DHA), an omega-3 fatty acid that is essential for normal brain growth and cognitive function, enters the brain. Transports LPC carrying long-chain fatty acids such LPC oleate and LPC palmitate with a minimum acyl chain length of 14 carbons. Does not transport docosahexaenoic acid in unesterified fatty acid. This chain is Sodium-dependent lysophosphatidylcholine symporter 1 (mfsd2a), found in Xenopus tropicalis (Western clawed frog).